The chain runs to 515 residues: Thioredoxin domain-containing protein 2 (515 aa).

A disordered region spans residues 1 to 23 (MTLNNGGKANERGSNENPLQALS). Phosphoserine is present on residues Ser14 and Ser39. The segment at 51 to 390 (TLHMSTEESE…NTIKSSEEDV (340 aa)) is disordered. Composition is skewed to polar residues over residues 61–75 (FPQQ…SENT) and 85–136 (KPSS…TNST). Repeat copies occupy residues 92-106 (QLKQ…GYSK), 107-121 (QTNY…AKTT), 122-136 (HPKQ…TNST), 137-151 (HYRE…EDII), 152-166 (QPKK…EDII), 167-181 (QSKK…EDII), 182-196 (QSKK…EDII), 197-211 (QSKK…EDII), 212-226 (QSKK…EDII), 227-241 (QPKK…EDSV), 242-256 (PSKK…EDSV), 257-271 (QPKK…EDSV), 272-286 (QSKE…KDSI), 287-301 (QSKE…QDSI), 302-316 (QSKE…KDSV), 317-331 (QSKE…HESI), 332-346 (QSKE…KDSI), 347-362 (PSKE…DTIQ), 363-375 (SQEE…EDTI), 376-390 (QSQE…EEDV), and 391-405 (QLSE…AEIE). A 21 X 15 AA approximate tandem repeat of Q-P-K-X-G-D-I-P-K-S-[PS]-E-[KE]-X-I region spans residues 92–405 (QLKQENISKS…KLLGLGAEIE (314 aa)). Composition is skewed to basic and acidic residues over residues 137–293 (HYRE…ETKV) and 302–358 (QSKE…KSPE). Ser146 bears the Phosphoserine mark. The segment covering 375 to 384 (IQSQEGNTIK) has biased composition (polar residues). The 118-residue stretch at 398–515 (LGLGAEIETL…KLERSISELK (118 aa)) folds into the Thioredoxin domain. Cysteines 442 and 445 form a disulfide.

As to expression, testis-specific. Strongly expressed in the testicular seminiferous tubules, mostly in the round spermatids.

Its subcellular location is the cytoplasm. Functionally, probably plays a regulatory role in sperm development. May participate in regulation of fibrous sheath (FS) assembly by supporting the formation of disulfide bonds during sperm tail morphogenesis. May also be required to rectify incorrect disulfide pairing and generate suitable pairs between the FS constituents. Can reduce disulfide bonds in vitro in the presence of NADP and thioredoxin reductase. This Mus musculus (Mouse) protein is Thioredoxin domain-containing protein 2 (Txndc2).